Here is a 79-residue protein sequence, read N- to C-terminus: Dolichyl-diphosphooligosaccharide--protein glycosyltransferase subunit TMEM258 (79 aa).

A run of 2 helical transmembrane segments spans residues 18–38 and 55–75; these read LPLL…AFTM and FIAA…LLWV.

Belongs to the OST5 family. As to quaternary structure, component of the oligosaccharyltransferase (OST) complex.

It is found in the membrane. Its pathway is protein modification; protein glycosylation. Its function is as follows. Subunit of the oligosaccharyl transferase (OST) complex that catalyzes the initial transfer of a defined glycan (Glc(3)Man(9)GlcNAc(2) in eukaryotes) from the lipid carrier dolichol-pyrophosphate to an asparagine residue within an Asn-X-Ser/Thr consensus motif in nascent polypeptide chains, the first step in protein N-glycosylation. N-glycosylation occurs cotranslationally and the complex associates with the Sec61 complex at the channel-forming translocon complex that mediates protein translocation across the endoplasmic reticulum (ER). All subunits are required for a maximal enzyme activity. This chain is Dolichyl-diphosphooligosaccharide--protein glycosyltransferase subunit TMEM258, found in Caenorhabditis briggsae.